Here is a 162-residue protein sequence, read N- to C-terminus: MSIAVFPGSFDPLTNGHLDIIKRASGIFEKVIVGVGNNTSKAALFTPQEKMTLISTVVKDLPNVEVAIMKGLTVQFMNEVGAKYIVRGLRNGKDFEYERDIAGMNSALADVETVLLLAKPKNQNISSSMVKEIGSMGADNMVKFVPKAIVEALKERLNAQKK.

Serine 9 contributes to the substrate binding site. ATP is bound by residues serine 9–phenylalanine 10 and histidine 17. Lysine 41, threonine 73, and arginine 87 together coordinate substrate. ATP contacts are provided by residues glycine 88–arginine 90, glutamate 98, and asparagine 122–serine 128.

This sequence belongs to the bacterial CoaD family. Homohexamer. Requires Mg(2+) as cofactor.

It localises to the cytoplasm. It carries out the reaction (R)-4'-phosphopantetheine + ATP + H(+) = 3'-dephospho-CoA + diphosphate. Its pathway is cofactor biosynthesis; coenzyme A biosynthesis; CoA from (R)-pantothenate: step 4/5. Its function is as follows. Reversibly transfers an adenylyl group from ATP to 4'-phosphopantetheine, yielding dephospho-CoA (dPCoA) and pyrophosphate. The sequence is that of Phosphopantetheine adenylyltransferase from Leuconostoc mesenteroides subsp. mesenteroides (strain ATCC 8293 / DSM 20343 / BCRC 11652 / CCM 1803 / JCM 6124 / NCDO 523 / NBRC 100496 / NCIMB 8023 / NCTC 12954 / NRRL B-1118 / 37Y).